Here is a 352-residue protein sequence, read N- to C-terminus: Rhodopsin, freshwater form (352 aa).

Residues methionine 1 to alanine 36 are Extracellular-facing. N-linked (GlcNAc...) asparagine glycosylation is found at asparagine 2 and asparagine 15. A helical transmembrane segment spans residues tyrosine 37–valine 61. Over threonine 62–asparagine 73 the chain is Cytoplasmic. A helical transmembrane segment spans residues tyrosine 74–serine 98. Residues methionine 99–glutamate 113 lie on the Extracellular side of the membrane. A disulfide bridge connects residues cysteine 110 and cysteine 187. Residues glycine 114–valine 133 traverse the membrane as a helical segment. Over glutamate 134–histidine 152 the chain is Cytoplasmic. Residues alanine 153–serine 176 traverse the membrane as a helical segment. Residues arginine 177–serine 202 are Extracellular-facing. An N-linked (GlcNAc...) asparagine glycan is attached at asparagine 200. A helical membrane pass occupies residues phenylalanine 203 to valine 230. Over lysine 231–arginine 252 the chain is Cytoplasmic. A helical transmembrane segment spans residues methionine 253 to phenylalanine 276. Topologically, residues threonine 277–glycine 284 are extracellular. A helical transmembrane segment spans residues proline 285 to methionine 309. N6-(retinylidene)lysine is present on lysine 296. Over asparagine 310–alanine 352 the chain is Cytoplasmic. The S-palmitoyl cysteine moiety is linked to residue cysteine 323. Positions glutamate 330–alanine 352 are disordered. Positions alanine 334–alanine 352 are enriched in low complexity.

This sequence belongs to the G-protein coupled receptor 1 family. Opsin subfamily. Phosphorylated on some or all of the serine and threonine residues present in the C-terminal region. Rod shaped photoreceptor cells which mediates vision in dim light.

The protein resides in the membrane. Visual pigments such as rhodopsin and porphyropsin are light-absorbing molecules that mediate vision. Rhodopsin consists of an apoprotein, opsin, covalently linked to 11-cis-retinal. This receptor is coupled to the activation of phospholipase C. Porphyropsin consists of opsin covalently linked to 11-cis 3,4-didehydroretinal. In Anguilla anguilla (European freshwater eel), this protein is Rhodopsin, freshwater form.